The following is a 134-amino-acid chain: C-C motif chemokine 21 (134 aa).

Positions 1–23 (MAQSLALSLLILVLAFGIPRTQG) are cleaved as a signal peptide. 3 disulfides stabilise this stretch: C31-C57, C32-C75, and C103-C122. The interval 88–134 (QHLDKTPSPQKPAQGCRKDRGASKTGKKGKGSKGCKRTERSQTPKGP) is disordered. A C-terminal basic extension region spans residues 98-134 (KPAQGCRKDRGASKTGKKGKGSKGCKRTERSQTPKGP). Positions 112–122 (TGKKGKGSKGC) are enriched in basic residues. Residues 123–134 (KRTERSQTPKGP) are compositionally biased toward basic and acidic residues.

This sequence belongs to the intercrine beta (chemokine CC) family. As to quaternary structure, monomer. Binds to CCR7. Interacts with PDPN; relocalizes PDPN to the basolateral membrane. Interacts with TNFAIP6 (via Link domain). Interacts with GPR174. As to expression, highly expressed in high endothelial venules of lymph nodes, spleen and appendix. Intermediate levels found in small intestine, thyroid gland and trachea. Low level expression in thymus, bone marrow, liver, and pancreas. Also found in tonsil, fetal heart and fetal spleen.

It localises to the secreted. Functionally, inhibits hemopoiesis and stimulates chemotaxis. Chemotactic in vitro for thymocytes and activated T-cells, but not for B-cells, macrophages, or neutrophils. Shows preferential activity towards naive T-cells. May play a role in mediating homing of lymphocytes to secondary lymphoid organs. Binds to atypical chemokine receptor ACKR4 and mediates the recruitment of beta-arrestin (ARRB1/2) to ACKR4. This chain is C-C motif chemokine 21 (CCL21), found in Homo sapiens (Human).